The primary structure comprises 471 residues: ATP synthase subunit beta (471 aa).

156–163 lines the ATP pocket; sequence GGAGVGKT.

The protein belongs to the ATPase alpha/beta chains family. F-type ATPases have 2 components, CF(1) - the catalytic core - and CF(0) - the membrane proton channel. CF(1) has five subunits: alpha(3), beta(3), gamma(1), delta(1), epsilon(1). CF(0) has three main subunits: a(1), b(2) and c(9-12). The alpha and beta chains form an alternating ring which encloses part of the gamma chain. CF(1) is attached to CF(0) by a central stalk formed by the gamma and epsilon chains, while a peripheral stalk is formed by the delta and b chains.

It localises to the cell membrane. The catalysed reaction is ATP + H2O + 4 H(+)(in) = ADP + phosphate + 5 H(+)(out). Its function is as follows. Produces ATP from ADP in the presence of a proton gradient across the membrane. The catalytic sites are hosted primarily by the beta subunits. The chain is ATP synthase subunit beta from Lysinibacillus sphaericus (strain C3-41).